The primary structure comprises 238 residues: MKLTPKELDKLMLHYAGELARKRKEKGIKLNYVEAVALISAHIMEEARAGKKTAAELMQEGRTLLKPDDVMDGVASMIHEVGIEAMFPDGTKLVTVHTPIEANGKLVPGELFLKNEDITINEGKKAVSVKVKNVGDRPVQIGSHFHFFEVNRCLDFDREKTFGKRLDIASGTAVRFEPGEEKSVELIDIGGNRRIFGFNALVDRQADNESKKIALHRAKERGFHGAKSDDNYVKTIKE.

The segment at 1 to 102 is urease gamma; sequence MKLTPKELDK…LVTVHTPIEA (102 aa). The urease beta stretch occupies residues 103–238; that stretch reads NGKLVPGELF…DDNYVKTIKE (136 aa).

It in the N-terminal section; belongs to the urease gamma subunit family. This sequence in the C-terminal section; belongs to the urease beta subunit family. As to quaternary structure, heterohexamer of 3 UreA (alpha) and 3 UreB (beta) subunits. Four heterohexamers assemble to form a 16 nm dodecameric complex.

It catalyses the reaction urea + 2 H2O + H(+) = hydrogencarbonate + 2 NH4(+). It participates in nitrogen metabolism; urea degradation; CO(2) and NH(3) from urea (urease route): step 1/1. In Helicobacter pylori (strain J99 / ATCC 700824) (Campylobacter pylori J99), this protein is Urease subunit alpha.